Reading from the N-terminus, the 123-residue chain is MSIDEILEAVEGLTVLELNELVEKAEEKFGVSAAAPVAVAGGAPAAGGAAAEEKSEFDVILASAGEAKMKVIKAVKDLTGLGLKDAKALVDEAPKAIKEGASKEEAEELKAKLEEVGATIELK.

Belongs to the bacterial ribosomal protein bL12 family. As to quaternary structure, homodimer. Part of the ribosomal stalk of the 50S ribosomal subunit. Forms a multimeric L10(L12)X complex, where L10 forms an elongated spine to which 2 to 4 L12 dimers bind in a sequential fashion. Binds GTP-bound translation factors.

Its function is as follows. Forms part of the ribosomal stalk which helps the ribosome interact with GTP-bound translation factors. Is thus essential for accurate translation. The chain is Large ribosomal subunit protein bL12 from Finegoldia magna (strain ATCC 29328 / DSM 20472 / WAL 2508) (Peptostreptococcus magnus).